The following is a 40-amino-acid chain: Cytochrome c3 hydrogenase small chain (40 aa).

The cofactor is Fe cation.

It carries out the reaction 2 Fe(III)-[cytochrome c3] + H2 = 2 Fe(II)-[cytochrome c3] + 2 H(+). The polypeptide is Cytochrome c3 hydrogenase small chain (hoxK) (Acidithiobacillus ferrooxidans (Thiobacillus ferrooxidans)).